The primary structure comprises 783 residues: Isoamylase 1, chloroplastic (783 aa).

The transit peptide at Met1–Ser43 directs the protein to the chloroplast. Catalysis depends on Asp410, which acts as the Nucleophile. Catalysis depends on Glu466, which acts as the Proton donor.

This sequence belongs to the glycosyl hydrolase 13 family. As to quaternary structure, associates with ISA2 to form the heteromultimeric complex Iso1 required for amylopectin synthesis.

The protein localises to the plastid. It is found in the chloroplast. The enzyme catalyses Hydrolysis of (1-&gt;6)-alpha-D-glucosidic branch linkages in glycogen, amylopectin and their beta-limit dextrins.. Its pathway is glycan biosynthesis; starch biosynthesis. In terms of biological role, involved in the trimming of pre-amylopectin chains. Accelerates the crystallization of nascent amylopectin molecules during starch synthesis. ISA1 and ISA2 work exclusively together as a multimeric holoenzyme. ISA1-ISA2 removes preferentially branches that are very close to other branches. Promotes negative gravitropic responses in shoots by facilitating starch granules (statoliths) formation in hypocotyls. The sequence is that of Isoamylase 1, chloroplastic from Arabidopsis thaliana (Mouse-ear cress).